The primary structure comprises 408 residues: BRCA1-A complex subunit Abraxas 1 (408 aa).

The region spanning 7–155 is the MPN domain; it reads TAVISGFVFG…KSTHRLEYAL (149 aa). Positions 210-272 form a coiled coil; sequence ALAEVNRISD…MEEKGNKVSE (63 aa). The tract at residues 335–408 is disordered; sequence HRRQAGKRKA…EVSRSKSPTF (74 aa). The segment covering 337-358 has biased composition (basic residues); sequence RQAGKRKAHSKQLGKTSTKKSR. Polar residues predominate over residues 394-408; it reads QSLNVEVSRSKSPTF. Phosphoserine is present on Ser-405. The pSXXF motif motif lies at 405-408; the sequence is SPTF.

This sequence belongs to the FAM175 family. Abraxas subfamily. In terms of assembly, component of the BRCA1-A complex. Component of the BRISC complex. Homodimer. Interacts directly (when phosphorylated at Ser-405) with brca1. The phosphorylated homodimer can interact directly with two brca1 chains, giving rise to a heterotetramer. Phosphorylation of Ser-405 of the pSXXF motif by ATM or ATR constitutes a specific recognition motif for the BRCT domain of BRCA1.

The protein resides in the nucleus. Its function is as follows. Involved in DNA damage response and double-strand break (DSB) repair. Component of the BRCA1-A complex, acting as a central scaffold protein that assembles the various components of the complex and mediates the recruitment of brca1. The BRCA1-A complex specifically recognizes 'Lys-63'-linked ubiquitinated histones H2A and H2AX at DNA lesion sites, leading to target the brca1-bard1 heterodimer to sites of DNA damage at DSBs. This complex also possesses deubiquitinase activity that specifically removes 'Lys-63'-linked ubiquitin on histones H2A and H2AX. In Xenopus laevis (African clawed frog), this protein is BRCA1-A complex subunit Abraxas 1.